We begin with the raw amino-acid sequence, 452 residues long: CUGBP Elav-like family member 3 (452 aa).

RRM domains are found at residues 7–88 (IKLF…PADS), 94–174 (RKLF…FADT), and 367–445 (CNIF…LKRP).

Belongs to the CELF/BRUNOL family.

The protein localises to the nucleus. It localises to the cytoplasm. In terms of biological role, RNA-binding protein that may be involved in the regulation of pre-mRNA alternative splicing. This Danio rerio (Zebrafish) protein is CUGBP Elav-like family member 3 (celf3).